The chain runs to 445 residues: Tubulin beta chain (445 aa).

GTP-binding residues include Gln11, Glu69, Ser138, Gly142, Thr143, Gly144, Asn204, and Asn226. Glu69 lines the Mg(2+) pocket.

This sequence belongs to the tubulin family. Dimer of alpha and beta chains. A typical microtubule is a hollow water-filled tube with an outer diameter of 25 nm and an inner diameter of 15 nM. Alpha-beta heterodimers associate head-to-tail to form protofilaments running lengthwise along the microtubule wall with the beta-tubulin subunit facing the microtubule plus end conferring a structural polarity. Microtubules usually have 13 protofilaments but different protofilament numbers can be found in some organisms and specialized cells. It depends on Mg(2+) as a cofactor.

Its subcellular location is the cytoplasm. The protein resides in the cytoskeleton. In terms of biological role, tubulin is the major constituent of microtubules, a cylinder consisting of laterally associated linear protofilaments composed of alpha- and beta-tubulin heterodimers. Microtubules grow by the addition of GTP-tubulin dimers to the microtubule end, where a stabilizing cap forms. Below the cap, tubulin dimers are in GDP-bound state, owing to GTPase activity of alpha-tubulin. This chain is Tubulin beta chain, found in Leishmania mexicana.